The sequence spans 138 residues: Small ribosomal subunit protein uS9c (138 aa).

Belongs to the universal ribosomal protein uS9 family.

It is found in the plastid. The protein resides in the chloroplast. The protein is Small ribosomal subunit protein uS9c (rps9) of Trieres chinensis (Marine centric diatom).